The chain runs to 216 residues: Adenylate kinase (216 aa).

10–15 (GAGKGT) contributes to the ATP binding site. The segment at 30-59 (STGDIFRANIKEKTPLGIEAKRYIDNGQLV) is NMP. AMP-binding positions include T31, R36, 57-59 (QLV), 85-88 (GFPR), and Q92. The tract at residues 126–163 (GRRVCTSCGASYHIRFNPPKIEGKCDICDNELIQRKDD) is LID. R127 serves as a coordination point for ATP. Residues C130 and C133 each contribute to the Zn(2+) site. An ATP-binding site is contributed by 136–137 (SY). 2 residues coordinate Zn(2+): C150 and C153. 2 residues coordinate AMP: R160 and R171. E199 provides a ligand contact to ATP.

Belongs to the adenylate kinase family. Monomer.

Its subcellular location is the cytoplasm. It catalyses the reaction AMP + ATP = 2 ADP. It participates in purine metabolism; AMP biosynthesis via salvage pathway; AMP from ADP: step 1/1. Catalyzes the reversible transfer of the terminal phosphate group between ATP and AMP. Plays an important role in cellular energy homeostasis and in adenine nucleotide metabolism. The chain is Adenylate kinase from Clostridium botulinum (strain 657 / Type Ba4).